The chain runs to 534 residues: Origin of replication complex subunit 5 (534 aa).

Positions 1–36 (MPPKEESSKVTRRSTRSSASVTVENSEPIESHTPTI) are disordered. Residue 83-90 (GGASTGKT) coordinates ATP. Positions 129 to 136 (HRKCSLNG) match the Nuclear localization signal motif. Residues 397–428 (MFDSTGGMDNRKRKRKASEKSMEKKEIAEQEA) are disordered. The span at 414–424 (SEKSMEKKEIA) shows a compositional bias: basic and acidic residues.

It belongs to the ORC5 family. In terms of assembly, component of the origin recognition complex (ORC) composed of at least ORC1 (ORC1A or ORC1B), ORC2, ORC3, ORC4, ORC5 and ORC6. ORC is regulated in a cell-cycle and development dependent manner. It is sequentially assembled at the exit from anaphase of mitosis and disassembled as cells enter S phase. Interacts directly with ORC1A, ORC1B, ORC2, ORC3, ORC4 and ORC6. As to expression, follow a cell-cycle regulation with a peak at the G1/S-phase. Mostly expressed in flower buds and cauline leaves, and, to a lower exent, in roots, leaves and stems. Expressed at low levels ubiquitously.

The protein resides in the nucleus. Functionally, component of the origin recognition complex (ORC) that binds origins of replication. DNA-binding is ATP-dependent. The specific DNA sequences that define origins of replication have not been identified yet. ORC is required to assemble the pre-replication complex necessary to initiate DNA replication. This chain is Origin of replication complex subunit 5, found in Arabidopsis thaliana (Mouse-ear cress).